The sequence spans 167 residues: Cell number regulator 3 (167 aa).

The chain crosses the membrane as a helical span at residues 67–84 (GMTSCGTSAALFALIQWL).

This sequence belongs to the cornifelin family. In terms of tissue distribution, expressed only in pollen.

The protein resides in the membrane. The protein is Cell number regulator 3 (CNR3) of Zea mays (Maize).